The sequence spans 214 residues: uncharacterized protein (214 aa).

The next 4 membrane-spanning stretches (helical) occupy residues 10 to 30, 55 to 75, 147 to 167, and 174 to 194; these read IPPL…SLGI, IGVG…GYAI, VSGA…AGMA, and RFSW…AILL.

It belongs to the DedA family.

Its subcellular location is the cell membrane. This is an uncharacterized protein from Mycobacterium leprae (strain TN).